The sequence spans 174 residues: Co-chaperone protein HscB homolog (174 aa).

The J domain occupies 2–74 (NYFELFKFSP…IRRAEHMLSL (73 aa)).

This sequence belongs to the HscB family. In terms of assembly, interacts with HscA and stimulates its ATPase activity.

Co-chaperone involved in the maturation of iron-sulfur cluster-containing proteins. Seems to help targeting proteins to be folded toward HscA. The protein is Co-chaperone protein HscB homolog of Shewanella sp. (strain ANA-3).